Reading from the N-terminus, the 429-residue chain is Glutamate-1-semialdehyde 2,1-aminomutase (429 aa).

The residue at position 270 (K270) is an N6-(pyridoxal phosphate)lysine.

Belongs to the class-III pyridoxal-phosphate-dependent aminotransferase family. HemL subfamily. Homodimer. Pyridoxal 5'-phosphate serves as cofactor.

It localises to the cytoplasm. The enzyme catalyses (S)-4-amino-5-oxopentanoate = 5-aminolevulinate. It participates in porphyrin-containing compound metabolism; protoporphyrin-IX biosynthesis; 5-aminolevulinate from L-glutamyl-tRNA(Glu): step 2/2. The polypeptide is Glutamate-1-semialdehyde 2,1-aminomutase (Cupriavidus pinatubonensis (strain JMP 134 / LMG 1197) (Cupriavidus necator (strain JMP 134))).